Consider the following 506-residue polypeptide: Glutamate--tRNA ligase (506 aa).

Residues 24–34 carry the 'HIGH' region motif; the sequence is PSPTGTPHVGL. Positions 124–147 are disordered; that stretch reads TPEEVEQRHRAKGEDPKRGYDNYD. Basic and acidic residues predominate over residues 128–147; sequence VEQRHRAKGEDPKRGYDNYD. The 'KMSKS' region motif lies at 268 to 272; sequence KLSKR. Lys-271 serves as a coordination point for ATP.

This sequence belongs to the class-I aminoacyl-tRNA synthetase family. Glutamate--tRNA ligase type 1 subfamily. Monomer.

The protein resides in the cytoplasm. It carries out the reaction tRNA(Glu) + L-glutamate + ATP = L-glutamyl-tRNA(Glu) + AMP + diphosphate. In terms of biological role, catalyzes the attachment of glutamate to tRNA(Glu) in a two-step reaction: glutamate is first activated by ATP to form Glu-AMP and then transferred to the acceptor end of tRNA(Glu). The sequence is that of Glutamate--tRNA ligase from Kocuria rhizophila (strain ATCC 9341 / DSM 348 / NBRC 103217 / DC2201).